Here is a 373-residue protein sequence, read N- to C-terminus: ADP-forming sulfoacetate-CoA ligase subunit SauC (373 aa).

One can recognise an ATP-grasp domain in the interval 9–249 (KEAFREKGLP…YLQFNGDIAL (241 aa)). ATP is bound at residue 35 to 97 (FAEVGFPCVL…EEAVDIDREI (63 aa)). The Mg(2+) site is built by Glu186 and Asn188.

The protein belongs to the succinate/malate CoA ligase beta subunit family. Forms a complex with SauD. Mg(2+) serves as cofactor.

The enzyme catalyses sulfoacetate + ATP + CoA = sulfoacetyl-CoA + ADP + phosphate. Its function is as follows. Involved in the degradation of sulfoacetate. Catalyzes the CoA- and ATP-dependent conversion of sulfoacetate to sulfoacetyl-CoA and ADP. Cannot use other sulfonic and carboxylic acids, and shows only residual activity with 3-sulfopropanoate and malonic acid. The sequence is that of ADP-forming sulfoacetate-CoA ligase subunit SauC from Bilophila wadsworthia (strain 3_1_6).